The primary structure comprises 211 residues: ATP-dependent Clp protease proteolytic subunit (211 aa).

The active-site Nucleophile is the S106. H131 is a catalytic residue.

Belongs to the peptidase S14 family. Fourteen ClpP subunits assemble into 2 heptameric rings which stack back to back to give a disk-like structure with a central cavity, resembling the structure of eukaryotic proteasomes.

It localises to the cytoplasm. It carries out the reaction Hydrolysis of proteins to small peptides in the presence of ATP and magnesium. alpha-casein is the usual test substrate. In the absence of ATP, only oligopeptides shorter than five residues are hydrolyzed (such as succinyl-Leu-Tyr-|-NHMec, and Leu-Tyr-Leu-|-Tyr-Trp, in which cleavage of the -Tyr-|-Leu- and -Tyr-|-Trp bonds also occurs).. Its function is as follows. Cleaves peptides in various proteins in a process that requires ATP hydrolysis. Has a chymotrypsin-like activity. Plays a major role in the degradation of misfolded proteins. This Rhodopseudomonas palustris (strain BisA53) protein is ATP-dependent Clp protease proteolytic subunit.